The chain runs to 310 residues: Ribosomal RNA large subunit methyltransferase F (310 aa).

Belongs to the methyltransferase superfamily. METTL16/RlmF family.

Its subcellular location is the cytoplasm. It carries out the reaction adenosine(1618) in 23S rRNA + S-adenosyl-L-methionine = N(6)-methyladenosine(1618) in 23S rRNA + S-adenosyl-L-homocysteine + H(+). Specifically methylates the adenine in position 1618 of 23S rRNA. This Pseudoalteromonas translucida (strain TAC 125) protein is Ribosomal RNA large subunit methyltransferase F.